The primary structure comprises 88 residues: Putative septation protein SpoVG (88 aa).

It belongs to the SpoVG family.

Could be involved in septation. In Caldicellulosiruptor saccharolyticus (strain ATCC 43494 / DSM 8903 / Tp8T 6331), this protein is Putative septation protein SpoVG.